The chain runs to 393 residues: Ornithine decarboxylase 2 (393 aa).

Position 62 is an N6-(pyridoxal phosphate)lysine (K62). Pyridoxal 5'-phosphate contacts are provided by residues S194, G231, and 265–268 (EPGR). Residue 314 to 315 (YY) participates in substrate binding. The Proton donor; shared with dimeric partner role is filled by C343. D344 is a substrate binding site. Position 371 (Y371) interacts with pyridoxal 5'-phosphate.

This sequence belongs to the Orn/Lys/Arg decarboxylase class-II family. Homodimer. Only the dimer is catalytically active, as the active sites are constructed of residues from both monomers. The cofactor is pyridoxal 5'-phosphate.

It carries out the reaction L-ornithine + H(+) = putrescine + CO2. It functions in the pathway amine and polyamine biosynthesis; putrescine biosynthesis via L-ornithine pathway; putrescine from L-ornithine: step 1/1. With respect to regulation, inhibited by antizyme (AZ) in response to polyamine levels. AZ inhibits the assembly of the functional homodimer by binding to ODC monomers and targeting them for ubiquitin-independent proteolytic destruction by the 26S proteasome. Its function is as follows. Catalyzes the first and rate-limiting step of polyamine biosynthesis that converts ornithine into putrescine, which is the precursor for the polyamines, spermidine and spermine. Polyamines are essential for cell proliferation and are implicated in cellular processes, ranging from DNA replication to apoptosis. The protein is Ornithine decarboxylase 2 (Odc2) of Drosophila melanogaster (Fruit fly).